We begin with the raw amino-acid sequence, 205 residues long: Glycerol-3-phosphate acyltransferase (205 aa).

Topologically, residues Met1–Ala3 are periplasmic. A helical membrane pass occupies residues Ile4–Val24. Topologically, residues Cys25–Lys52 are cytoplasmic. The chain crosses the membrane as a helical span at residues Gly53–Ala73. Residues Tyr74–Pro80 are Periplasmic-facing. A helical membrane pass occupies residues Phe81 to Gly101. Over Phe102–Ala111 the chain is Cytoplasmic. The chain crosses the membrane as a helical span at residues Phe112–Leu132. At Thr133–Ser137 the chain is on the periplasmic side. A helical transmembrane segment spans residues Gly138–Phe158. At Lys159–Glu205 the chain is on the cytoplasmic side.

The protein belongs to the PlsY family. In terms of assembly, probably interacts with PlsX.

The protein resides in the cell inner membrane. The enzyme catalyses sn-glycerol 3-phosphate + an acyl-CoA = a 1-acyl-sn-glycero-3-phosphate + CoA. It catalyses the reaction a fatty acyl-[ACP] + sn-glycerol 3-phosphate = a 1-acyl-sn-glycero-3-phosphate + holo-[ACP]. Its pathway is lipid metabolism; phospholipid metabolism. In terms of biological role, catalyzes the transfer of an acyl group from acyl-ACP to glycerol-3-phosphate (G3P) to form lysophosphatidic acid (LPA). This enzyme can also utilize acyl-CoA as fatty acyl donor, but not acyl-PO(4). This chain is Glycerol-3-phosphate acyltransferase, found in Escherichia fergusonii (strain ATCC 35469 / DSM 13698 / CCUG 18766 / IAM 14443 / JCM 21226 / LMG 7866 / NBRC 102419 / NCTC 12128 / CDC 0568-73).